A 674-amino-acid chain; its full sequence is YAP1-binding protein 1 (674 aa).

It belongs to the YBP1 family. Interacts with YAP1. Forms a peroxide stress induced complex with YAP1 in the cytoplasm. Systematic proteome-wide 2-hybrid interaction studies suggest that YAP1, HYR1/GPX3, and YBP1 all interact with the nuclear pore complex subunit NUP116, which is involved in nucleocytoplasmic transport.

It is found in the cytoplasm. In terms of biological role, involved in oxidative stress response and redox homeostasis. Required for hydrogen peroxide-induced oxidation and nuclear localization (activation) of YAP1. Functions probably in concert with HYP1/GPX3, the actual YAP1 modifying enzyme. YBP1 is not required for HYP1/GPX3-independent, diamide-induced oxidation of YAP1. The sequence is that of YAP1-binding protein 1 from Saccharomyces cerevisiae (strain ATCC 204508 / S288c) (Baker's yeast).